A 209-amino-acid polypeptide reads, in one-letter code: Guanylate kinase (209 aa).

The Guanylate kinase-like domain occupies 5–184 (GLLIVFSGPS…AAERVKRVIE (180 aa)). 12-19 (GPSGVGKG) provides a ligand contact to ATP.

This sequence belongs to the guanylate kinase family.

Its subcellular location is the cytoplasm. It catalyses the reaction GMP + ATP = GDP + ADP. Functionally, essential for recycling GMP and indirectly, cGMP. This is Guanylate kinase from Streptococcus thermophilus (strain CNRZ 1066).